The primary structure comprises 159 residues: 2-C-methyl-D-erythritol 2,4-cyclodiphosphate synthase (159 aa).

Residues Asp-10 and His-12 each coordinate a divalent metal cation. Residues 10–12 (DVH) and 37–38 (HS) contribute to the 4-CDP-2-C-methyl-D-erythritol 2-phosphate site. An a divalent metal cation-binding site is contributed by His-45. 4-CDP-2-C-methyl-D-erythritol 2-phosphate contacts are provided by residues 59–61 (DIG), 64–68 (FLDTD), 103–109 (AQAPKML), 135–138 (TTTE), Phe-142, and Arg-145.

It belongs to the IspF family. In terms of assembly, homotrimer. It depends on a divalent metal cation as a cofactor.

The enzyme catalyses 4-CDP-2-C-methyl-D-erythritol 2-phosphate = 2-C-methyl-D-erythritol 2,4-cyclic diphosphate + CMP. The protein operates within isoprenoid biosynthesis; isopentenyl diphosphate biosynthesis via DXP pathway; isopentenyl diphosphate from 1-deoxy-D-xylulose 5-phosphate: step 4/6. In terms of biological role, involved in the biosynthesis of isopentenyl diphosphate (IPP) and dimethylallyl diphosphate (DMAPP), two major building blocks of isoprenoid compounds. Catalyzes the conversion of 4-diphosphocytidyl-2-C-methyl-D-erythritol 2-phosphate (CDP-ME2P) to 2-C-methyl-D-erythritol 2,4-cyclodiphosphate (ME-CPP) with a corresponding release of cytidine 5-monophosphate (CMP). This chain is 2-C-methyl-D-erythritol 2,4-cyclodiphosphate synthase, found in Francisella tularensis subsp. holarctica (strain OSU18).